Consider the following 170-residue polypeptide: Large ribosomal subunit protein uL5 (170 aa).

The protein belongs to the universal ribosomal protein uL5 family. In terms of assembly, component of the large ribosomal subunit.

The protein resides in the nucleus. It localises to the cytoplasm. Its function is as follows. Component of the ribosome, a large ribonucleoprotein complex responsible for the synthesis of proteins in the cell. The small ribosomal subunit (SSU) binds messenger RNAs (mRNAs) and translates the encoded message by selecting cognate aminoacyl-transfer RNA (tRNA) molecules. The large subunit (LSU) contains the ribosomal catalytic site termed the peptidyl transferase center (PTC), which catalyzes the formation of peptide bonds, thereby polymerizing the amino acids delivered by tRNAs into a polypeptide chain. The nascent polypeptides leave the ribosome through a tunnel in the LSU and interact with protein factors that function in enzymatic processing, targeting, and the membrane insertion of nascent chains at the exit of the ribosomal tunnel. The protein is Large ribosomal subunit protein uL5 (RPL11) of Chlamydomonas reinhardtii (Chlamydomonas smithii).